We begin with the raw amino-acid sequence, 562 residues long: Putative transport protein ETA_21820 (562 aa).

Transmembrane regions (helical) follow at residues 8 to 28, 32 to 52, 66 to 86, 94 to 114, and 158 to 178; these read LLIG…LCLG, LGSV…LLGQ, FMLF…SIFF, MLAI…GKLF, and HLSL…IFGA. 2 consecutive RCK C-terminal domains span residues 202-288 and 290-373; these read LDPD…SFRN and KEVF…RIGF. Helical transmembrane passes span 383–403, 406–426, 440–460, 473–493, 503–523, and 540–560; these read LLAF…TFQF, FNFG…LGFL, ALTM…GLSA, LLML…CFLF, ALLF…EIIS, and AIAN…WPIL.

The protein belongs to the AAE transporter (TC 2.A.81) family. YbjL subfamily.

It is found in the cell membrane. In Erwinia tasmaniensis (strain DSM 17950 / CFBP 7177 / CIP 109463 / NCPPB 4357 / Et1/99), this protein is Putative transport protein ETA_21820.